The following is an 85-amino-acid chain: Large ribosomal subunit protein bL27 (85 aa).

It belongs to the bacterial ribosomal protein bL27 family.

This is Large ribosomal subunit protein bL27 from Pseudomonas fluorescens (strain ATCC BAA-477 / NRRL B-23932 / Pf-5).